The sequence spans 596 residues: Aspartate--tRNA(Asp/Asn) ligase (596 aa).

E175 lines the L-aspartate pocket. The tract at residues 199-202 (QQYK) is aspartate. The L-aspartate site is built by R221 and H454. 221 to 223 (RDE) provides a ligand contact to ATP. E488 serves as a coordination point for ATP. R495 contributes to the L-aspartate binding site. An ATP-binding site is contributed by 540 to 543 (GVDR).

Belongs to the class-II aminoacyl-tRNA synthetase family. Type 1 subfamily. Homodimer.

It localises to the cytoplasm. It catalyses the reaction tRNA(Asx) + L-aspartate + ATP = L-aspartyl-tRNA(Asx) + AMP + diphosphate. Its function is as follows. Aspartyl-tRNA synthetase with relaxed tRNA specificity since it is able to aspartylate not only its cognate tRNA(Asp) but also tRNA(Asn). Reaction proceeds in two steps: L-aspartate is first activated by ATP to form Asp-AMP and then transferred to the acceptor end of tRNA(Asp/Asn). This Bartonella henselae (strain ATCC 49882 / DSM 28221 / CCUG 30454 / Houston 1) (Rochalimaea henselae) protein is Aspartate--tRNA(Asp/Asn) ligase.